A 354-amino-acid chain; its full sequence is Guanine nucleotide-binding protein G(t) subunit alpha-2 (354 aa).

A disordered region spans residues 1-28 (MGSGISAEDKELARRSKELEKKLQEDAD). G2 carries N-myristoyl glycine lipidation. The span at 7-28 (AEDKELARRSKELEKKLQEDAD) shows a compositional bias: basic and acidic residues. Residues 32–354 (KTVKLLLLGA…KENLKDCGLF (323 aa)) form the G-alpha domain. Residues 35–48 (KLLLLGAGESGKST) are G1 motif. GTP is bound by residues 40–47 (GAGESGKS), 175–181 (LRSRVKT), 200–204 (DVGGQ), 269–272 (NKKD), and A326. Positions 47 and 181 each coordinate Mg(2+). A G2 motif region spans residues 173–181 (DVLRSRVKT). The segment at 196-205 (FRMFDVGGQR) is G3 motif. Residues 265-272 (VLFLNKKD) form a G4 motif region. The tract at residues 324–329 (TCATDT) is G5 motif.

Belongs to the G-alpha family. G(i/o/t/z) subfamily. G proteins are composed of 3 units; alpha, beta and gamma. The alpha chain contains the guanine nucleotide binding site. As to expression, in the retina, expressed in the rod photoreceptors.

Its subcellular location is the cell projection. The protein localises to the cilium. It localises to the photoreceptor outer segment. It is found in the photoreceptor inner segment. Its function is as follows. Guanine nucleotide-binding proteins (G proteins) are involved as modulators or transducers in various transmembrane signaling systems. Transducin is an amplifier and one of the transducers of a visual impulse that performs the coupling between rhodopsin and cGMP-phosphodiesterase. The chain is Guanine nucleotide-binding protein G(t) subunit alpha-2 (Gnat2) from Mus musculus (Mouse).